We begin with the raw amino-acid sequence, 428 residues long: Adenylosuccinate synthetase (428 aa).

Residues 12–18 and 40–42 each bind GTP; these read GDEGKGK and GHT. Residue Asp13 is the Proton acceptor of the active site. Mg(2+) contacts are provided by Asp13 and Gly40. IMP contacts are provided by residues 13–16, 38–41, Thr128, Arg142, Gln223, Thr238, and Arg302; these read DEGK and NAGH. His41 functions as the Proton donor in the catalytic mechanism. Substrate is bound at residue 298 to 304; the sequence is TTTGRPR. Residues Arg304, 330-332, and 412-414 contribute to the GTP site; these read SID and SVG.

Belongs to the adenylosuccinate synthetase family. As to quaternary structure, homodimer. The cofactor is Mg(2+).

It is found in the cytoplasm. It carries out the reaction IMP + L-aspartate + GTP = N(6)-(1,2-dicarboxyethyl)-AMP + GDP + phosphate + 2 H(+). Its pathway is purine metabolism; AMP biosynthesis via de novo pathway; AMP from IMP: step 1/2. Plays an important role in the de novo pathway of purine nucleotide biosynthesis. Catalyzes the first committed step in the biosynthesis of AMP from IMP. In Streptococcus pneumoniae serotype 2 (strain D39 / NCTC 7466), this protein is Adenylosuccinate synthetase.